The primary structure comprises 810 residues: Transmembrane GTPase Marf (810 aa).

Topologically, residues 1 to 637 (MAAYLNRTIS…TTTPVEATPV (637 aa)) are cytoplasmic. Thr-8 bears the Phosphothreonine mark. Positions 13 to 40 (TGQTGPADDDRHASSTDTVDKSGPGSPL) are disordered. Over residues 20–32 (DDDRHASSTDTVD) the composition is skewed to basic and acidic residues. A Phosphoserine modification is found at Ser-38. Residues 134–382 (QRDHMKVAFF…IRYFEFQDFE (249 aa)) form the Dynamin-type G domain. The interval 144–151 (GRTSNGKS) is G1 motif. 147 to 152 (SNGKSS) contacts GTP. The segment at 170-171 (TT) is G2 motif. The G3 motif stretch occupies residues 239-242 (DSPG). GTP is bound at residue 298-301 (NRWD). A G4 motif region spans residues 298 to 301 (NRWD). Lys-327 is a region of interest (G5 motif). Ser-345 contacts GTP. The stretch at 427 to 476 (RNLKQDQKNLLTERIQGTETQMMQVTREMKMKIHNMVEEVEEKVSKALNE) forms a coiled coil. The residue at position 553 (Thr-553) is a Phosphothreonine. Ser-554 carries the post-translational modification Phosphoserine. Thr-555 is subject to Phosphothreonine. The segment at 609–630 (GQPALVNRQSSIGHSVSTPTTT) is disordered. A helical membrane pass occupies residues 638 to 648 (CLLPAPVVAGI). Over 649–668 (TPEQLSLISRFAVSSIGSQG) the chain is Mitochondrial intermembrane. A helical membrane pass occupies residues 669 to 689 (TVGGLVVAGVMLKTIGWRVLV). The Cytoplasmic segment spans residues 690-810 (GVGALYGCIY…IFEHNYISPQ (121 aa)). Residues 759–806 (TATTDMNDELKTLDSQLNILEANQKQLKLLRNKANYIQNELDIFEHNY) are a coiled coil.

It belongs to the TRAFAC class dynamin-like GTPase superfamily. Dynamin/Fzo/YdjA family. Mitofusin subfamily. Interacts with Mul1. Ubiquitinated by park and Mul1. Ubiquitinated, probably by HUWE1, when dietary stearate (C18:0) levels are low; ubiquitination inhibits mitochondrial fusion. As to expression, widely expressed in embryos, accumulating in the mesoderm and endoderm during gut development. In the male germ line, it is expressed in spermatogonia, spermatocytes and early spermatids.

Its subcellular location is the mitochondrion outer membrane. It carries out the reaction GTP + H2O = GDP + phosphate + H(+). Mitochondrial outer membrane GTPase that mediates mitochondrial clustering and fusion. Mitochondrial fusion is the physical merging of mitochondria that gives rise to mitochondrial networks, and this process is counterbalanced by mitochondrial fission which fragments networks. Promotes, but is not required for park recruitment to dysfunctional mitochondria. This chain is Transmembrane GTPase Marf (Marf), found in Drosophila melanogaster (Fruit fly).